We begin with the raw amino-acid sequence, 90 residues long: Putative membrane protein insertion efficiency factor (90 aa).

The protein belongs to the UPF0161 family.

Its subcellular location is the cell membrane. Functionally, could be involved in insertion of integral membrane proteins into the membrane. The sequence is that of Putative membrane protein insertion efficiency factor from Lactococcus lactis subsp. cremoris (strain SK11).